Here is a 309-residue protein sequence, read N- to C-terminus: Aspartate carbamoyltransferase catalytic subunit (309 aa).

Carbamoyl phosphate contacts are provided by arginine 55 and threonine 56. L-aspartate is bound at residue lysine 85. Residues arginine 106, histidine 135, and glutamine 138 each coordinate carbamoyl phosphate. L-aspartate-binding residues include arginine 168 and arginine 230. 2 residues coordinate carbamoyl phosphate: leucine 268 and proline 269.

The protein belongs to the aspartate/ornithine carbamoyltransferase superfamily. ATCase family. As to quaternary structure, heterododecamer (2C3:3R2) of six catalytic PyrB chains organized as two trimers (C3), and six regulatory PyrI chains organized as three dimers (R2).

It carries out the reaction carbamoyl phosphate + L-aspartate = N-carbamoyl-L-aspartate + phosphate + H(+). It participates in pyrimidine metabolism; UMP biosynthesis via de novo pathway; (S)-dihydroorotate from bicarbonate: step 2/3. In terms of biological role, catalyzes the condensation of carbamoyl phosphate and aspartate to form carbamoyl aspartate and inorganic phosphate, the committed step in the de novo pyrimidine nucleotide biosynthesis pathway. The sequence is that of Aspartate carbamoyltransferase catalytic subunit from Aliivibrio fischeri (strain ATCC 700601 / ES114) (Vibrio fischeri).